Here is a 253-residue protein sequence, read N- to C-terminus: Ditrans,polycis-undecaprenyl-diphosphate synthase ((2E,6E)-farnesyl-diphosphate specific) (253 aa).

Asp-26 is a catalytic residue. Asp-26 is a Mg(2+) binding site. Residues 27–30, Trp-31, Arg-39, His-43, and 71–73 contribute to the substrate site; these read GNGR and SSE. Residue Asn-74 is the Proton acceptor of the active site. Residues Trp-75, Arg-77, and Arg-194 each coordinate substrate. His-199 is a Mg(2+) binding site. 200–202 lines the substrate pocket; the sequence is RIS. Glu-213 contributes to the Mg(2+) binding site.

This sequence belongs to the UPP synthase family. Homodimer. Mg(2+) is required as a cofactor.

It catalyses the reaction 8 isopentenyl diphosphate + (2E,6E)-farnesyl diphosphate = di-trans,octa-cis-undecaprenyl diphosphate + 8 diphosphate. Functionally, catalyzes the sequential condensation of isopentenyl diphosphate (IPP) with (2E,6E)-farnesyl diphosphate (E,E-FPP) to yield (2Z,6Z,10Z,14Z,18Z,22Z,26Z,30Z,34E,38E)-undecaprenyl diphosphate (di-trans,octa-cis-UPP). UPP is the precursor of glycosyl carrier lipid in the biosynthesis of bacterial cell wall polysaccharide components such as peptidoglycan and lipopolysaccharide. This Shigella flexneri protein is Ditrans,polycis-undecaprenyl-diphosphate synthase ((2E,6E)-farnesyl-diphosphate specific).